The chain runs to 487 residues: Sugar transporter ERD6-like 6 (487 aa).

An N-acetylserine modification is found at serine 2. Helical transmembrane passes span 46 to 66 (ISVLACVLIVALGPIQFGFTC), 89 to 109 (VFGSLSNVGAMVGAIASGQIA), 115 to 135 (KGSLMIAAIPNIIGWLCISFA), 146 to 166 (LLEGFGVGIISYTVPVYIAEI), 178 to 198 (VNQLSVTIGIMLAYLLGLFVP), 201 to 221 (ILAVLGILPCTLLIPGLFFIP), 284 to 304 (LMVGIGLLVLQQLGGINGVLF), 320 to 340 (AATFGVGAIQVVATAISTWLV), 347 to 367 (LLLTISSVGMTISLVIVAAAF), 389 to 409 (VGVVAMVVFFSLGMGPIPWLI), 425 to 445 (IATLANWFFSWLITMTANLLL), and 451 to 471 (GTFTLYGLVCAFTVVFVTLWV).

This sequence belongs to the major facilitator superfamily. Sugar transporter (TC 2.A.1.1) family.

It localises to the membrane. Sugar transporter. This is Sugar transporter ERD6-like 6 from Arabidopsis thaliana (Mouse-ear cress).